We begin with the raw amino-acid sequence, 147 residues long: uncharacterized protein (147 aa).

This is an uncharacterized protein from Mycoplasma pneumoniae (strain ATCC 29342 / M129 / Subtype 1) (Mycoplasmoides pneumoniae).